Here is a 550-residue protein sequence, read N- to C-terminus: Pectinesterase 2.1 (550 aa).

N-linked (GlcNAc...) asparagine glycosylation is present at asparagine 179. Positions 312 and 342 each coordinate substrate. Residues cysteine 331 and cysteine 358 are joined by a disulfide bond. Aspartate 365 functions as the Proton donor in the catalytic mechanism. Aspartate 386 serves as the catalytic Nucleophile. Cysteine 399 and cysteine 433 form a disulfide bridge. The substrate site is built by arginine 454 and tryptophan 456.

This sequence in the N-terminal section; belongs to the PMEI family. The protein in the C-terminal section; belongs to the pectinesterase family.

The protein localises to the secreted. It is found in the cell wall. The catalysed reaction is [(1-&gt;4)-alpha-D-galacturonosyl methyl ester](n) + n H2O = [(1-&gt;4)-alpha-D-galacturonosyl](n) + n methanol + n H(+). It participates in glycan metabolism; pectin degradation; 2-dehydro-3-deoxy-D-gluconate from pectin: step 1/5. Its function is as follows. Pectinesterase may play a role in cell wall metabolism during fruit growth and development prior to ripening and may be required for preparing cell walls for softening by polygalacturonase during fruit ripening. This Solanum lycopersicum (Tomato) protein is Pectinesterase 2.1 (PME2.1).